The primary structure comprises 362 residues: UDP-N-acetylglucosamine--N-acetylmuramyl-(pentapeptide) pyrophosphoryl-undecaprenol N-acetylglucosamine transferase (362 aa).

Residues 14–16, Arg-170, Ser-199, and Gln-289 contribute to the UDP-N-acetyl-alpha-D-glucosamine site; that span reads TGG.

This sequence belongs to the glycosyltransferase 28 family. MurG subfamily.

It is found in the cell inner membrane. It carries out the reaction di-trans,octa-cis-undecaprenyl diphospho-N-acetyl-alpha-D-muramoyl-L-alanyl-D-glutamyl-meso-2,6-diaminopimeloyl-D-alanyl-D-alanine + UDP-N-acetyl-alpha-D-glucosamine = di-trans,octa-cis-undecaprenyl diphospho-[N-acetyl-alpha-D-glucosaminyl-(1-&gt;4)]-N-acetyl-alpha-D-muramoyl-L-alanyl-D-glutamyl-meso-2,6-diaminopimeloyl-D-alanyl-D-alanine + UDP + H(+). It functions in the pathway cell wall biogenesis; peptidoglycan biosynthesis. In terms of biological role, cell wall formation. Catalyzes the transfer of a GlcNAc subunit on undecaprenyl-pyrophosphoryl-MurNAc-pentapeptide (lipid intermediate I) to form undecaprenyl-pyrophosphoryl-MurNAc-(pentapeptide)GlcNAc (lipid intermediate II). This chain is UDP-N-acetylglucosamine--N-acetylmuramyl-(pentapeptide) pyrophosphoryl-undecaprenol N-acetylglucosamine transferase, found in Borrelia turicatae (strain 91E135).